We begin with the raw amino-acid sequence, 132 residues long: CLAVATA3/ESR (CLE)-related protein ESR2 (132 aa).

A signal peptide spans 1 to 26; sequence MASRMGMVAIVSLFVCALVASTSVNA. Residues 68-132 are disordered; that stretch reads NRASKQLDSE…IGPPPFLDRY (65 aa). Residues P82 and P85 each carry the hydroxyproline modification. P85 is a glycosylation site (O-linked (Ara...) hydroxyproline). The segment covering 123-132 has biased composition (pro residues); that stretch reads IGPPPFLDRY.

Belongs to the CLV3/ESR signal peptide family. The O-glycosylation (arabinosylation) of the hydroxyproline Pro-85 enhances binding affinity of the ESR2p peptide for its receptor. Seed endosperm.

The protein resides in the secreted. It localises to the extracellular space. Its function is as follows. Extracellular signal peptide that regulates cell fate. This Zea mays (Maize) protein is CLAVATA3/ESR (CLE)-related protein ESR2.